A 333-amino-acid chain; its full sequence is Probable tRNA pseudouridine synthase B (333 aa).

The active-site Nucleophile is the Asp-66. A PUA domain is found at 233 to 308 (LKKIIVKDSA…EVVEITRVIM (76 aa)).

It belongs to the pseudouridine synthase TruB family. Type 2 subfamily.

It catalyses the reaction uridine(55) in tRNA = pseudouridine(55) in tRNA. Its function is as follows. Could be responsible for synthesis of pseudouridine from uracil-55 in the psi GC loop of transfer RNAs. This is Probable tRNA pseudouridine synthase B from Methanococcus maripaludis (strain C6 / ATCC BAA-1332).